A 382-amino-acid polypeptide reads, in one-letter code: uncharacterized protein (382 aa).

A run of 10 helical transmembrane segments spans residues 8 to 28, 41 to 61, 73 to 93, 94 to 114, 133 to 153, 157 to 177, 208 to 228, 274 to 294, 325 to 345, and 349 to 369; these read VLLLLCGLLLFTISIAVLNTL, WQVGMVSSSYFTGNLVGTLIA, SYHCSCILFALATCGLMLTVD, FWSWLGWRFLAGIACALIWVI, AAYMMVYYLGTVIGQLLLGIV, LLSVIPWVGALVITAMLPLLF, GCIISGVLLGSLYGLLPLYLS, VVILGSVAILGNYAMAPALFI, ALLMSYTLGSLAGPTMTSLLM, and SDNLLFIMIAGVAFVYLMMLL.

This sequence belongs to the major facilitator superfamily. YcaD (TC 2.A.1.26) family.

The protein resides in the cell inner membrane. This is an uncharacterized protein from Yersinia pseudotuberculosis serotype O:3 (strain YPIII).